Here is a 168-residue protein sequence, read N- to C-terminus: Ribosome maturation factor RimM (168 aa).

Residues 93–168 form the PRC barrel domain; that stretch reads EDEFYQSDLV…IVLNIPEFID (76 aa).

Belongs to the RimM family. Binds ribosomal protein uS19.

It localises to the cytoplasm. Functionally, an accessory protein needed during the final step in the assembly of 30S ribosomal subunit, possibly for assembly of the head region. Essential for efficient processing of 16S rRNA. May be needed both before and after RbfA during the maturation of 16S rRNA. It has affinity for free ribosomal 30S subunits but not for 70S ribosomes. The sequence is that of Ribosome maturation factor RimM from Wolbachia pipientis wMel.